A 732-amino-acid chain; its full sequence is Polyphosphate kinase (732 aa).

N61 lines the ATP pocket. Residues R417 and R447 each contribute to the Mg(2+) site. The Phosphohistidine intermediate role is filled by H477. ATP contacts are provided by Y510, R606, and H634. Residues 699-718 are disordered; sequence DGTYRQRQPAPGEAERGTHS.

This sequence belongs to the polyphosphate kinase 1 (PPK1) family. Requires Mg(2+) as cofactor. An intermediate of this reaction is the autophosphorylated ppk in which a phosphate is covalently linked to a histidine residue through a N-P bond.

It carries out the reaction [phosphate](n) + ATP = [phosphate](n+1) + ADP. Functionally, catalyzes the reversible transfer of the terminal phosphate of ATP to form a long-chain polyphosphate (polyP). The sequence is that of Polyphosphate kinase from Thermosynechococcus vestitus (strain NIES-2133 / IAM M-273 / BP-1).